The primary structure comprises 485 residues: Hexokinase-1 (485 aa).

Residues 21–468 enclose the Hexokinase domain; it reads KELMDEIHQL…SGAGAAVIAA (448 aa). The hexokinase small subdomain stretch occupies residues 75-209; the sequence is TGKESGNYLA…ELPIEIVALI (135 aa). ATP is bound by residues 86–91 and K111; that span reads DLGGTN. Residues S158, 175–176, 210–211, and N237 contribute to the substrate site; these read TK and ND. The tract at residues 210 to 457 is hexokinase large subdomain; the sequence is NDTVGTLIAS…DPITIVPAED (248 aa). At S245 the chain carries Phosphoserine. A substrate-binding site is contributed by E269. The residue at position 272 (S272) is a Phosphoserine. E302 lines the substrate pocket. Residues 307-308, 344-348, and 419-423 contribute to the ATP site; these read GY, TSYPA, and SVYNK.

This sequence belongs to the hexokinase family. As to quaternary structure, homodimer.

It catalyses the reaction a D-hexose + ATP = a D-hexose 6-phosphate + ADP + H(+). The catalysed reaction is D-fructose + ATP = D-fructose 6-phosphate + ADP + H(+). It carries out the reaction D-glucose + ATP = D-glucose 6-phosphate + ADP + H(+). Its pathway is carbohydrate metabolism; hexose metabolism. It functions in the pathway carbohydrate degradation; glycolysis; D-glyceraldehyde 3-phosphate and glycerone phosphate from D-glucose: step 1/4. Subject to allosteric control. Substrate inhibition by ATP. Its function is as follows. Catalyzes the phosphorylation of hexose, such as D-glucose and D-fructose, to hexose 6-phosphate (D-glucose 6-phosphate and D-fructose 6-phosphate, respectively). Mediates the initial step of glycolysis by catalyzing phosphorylation of D-glucose to D-glucose 6-phosphate. The polypeptide is Hexokinase-1 (HXK1) (Saccharomyces cerevisiae (strain ATCC 204508 / S288c) (Baker's yeast)).